Reading from the N-terminus, the 93-residue chain is Small ribosomal subunit protein uS19 (93 aa).

This sequence belongs to the universal ribosomal protein uS19 family.

Protein S19 forms a complex with S13 that binds strongly to the 16S ribosomal RNA. This Helicobacter pylori (strain G27) protein is Small ribosomal subunit protein uS19.